Consider the following 300-residue polypeptide: Protoheme IX farnesyltransferase (300 aa).

The next 8 helical transmembrane spans lie at 24–44 (VTQLAVFCAVIGMFLATPGMV), 46–66 (WHVLIGGTIGIWLLAGAAFAI), 94–114 (PQILLFSAVLGSVGAWTLYTF), 118–138 (LTMWLTIATFVGYAVVYTLLL), 146–166 (IVIGGASGAMPPALGWAAVTG), 172–192 (AWILVLIIFVWTPPHFWVLAL), 224–244 (VILFAVTLMPFISGMSGVVYL), and 278–298 (IVYLSLLFAALLVDHYARPLL).

This sequence belongs to the UbiA prenyltransferase family. Protoheme IX farnesyltransferase subfamily.

It is found in the cell inner membrane. The enzyme catalyses heme b + (2E,6E)-farnesyl diphosphate + H2O = Fe(II)-heme o + diphosphate. It functions in the pathway porphyrin-containing compound metabolism; heme O biosynthesis; heme O from protoheme: step 1/1. In terms of biological role, converts heme B (protoheme IX) to heme O by substitution of the vinyl group on carbon 2 of heme B porphyrin ring with a hydroxyethyl farnesyl side group. This Burkholderia ambifaria (strain ATCC BAA-244 / DSM 16087 / CCUG 44356 / LMG 19182 / AMMD) (Burkholderia cepacia (strain AMMD)) protein is Protoheme IX farnesyltransferase.